We begin with the raw amino-acid sequence, 301 residues long: Hydroxymycolate synthase MmaA4 (301 aa).

Residues 42–43 (YS), 81–83 (GCG), 103–108 (TLSKNQ), 132–133 (WE), and Ile-145 each bind S-adenosyl-L-methionine. Cys-278 is a catalytic residue.

It belongs to the CFA/CMAS family. In terms of assembly, monomer.

It participates in lipid metabolism; mycolic acid biosynthesis. Its function is as follows. Involved in the biosynthesis of hydroxymycolate, a common precursor of oxygenated mycolic acids (methoxymycolate and ketomycolate). Probably transfers a methyl group from the S-adenosylmethionine (SAM) cofactor and, subsequently or simultaneously, a water molecule onto the double bound of ethylene substrates, leading to the formation of the hydroxylated product at the distal position. In Mycobacterium bovis (strain ATCC BAA-935 / AF2122/97), this protein is Hydroxymycolate synthase MmaA4 (cmaA).